The following is a 163-amino-acid chain: Cytosolic iron-sulfur assembly component 2B (163 aa).

Belongs to the MIP18 family.

Its subcellular location is the nucleus. The protein localises to the cytoplasm. The protein resides in the cytoskeleton. It localises to the spindle. Its function is as follows. Component of the cytosolic iron-sulfur (Fe/S) protein assembly machinery. Required for the maturation of extramitochondrial Fe/S proteins. May play a role in chromosome segregation through establishment of sister chromatid cohesion. The polypeptide is Cytosolic iron-sulfur assembly component 2B (Dictyostelium discoideum (Social amoeba)).